Here is a 72-residue protein sequence, read N- to C-terminus: uncharacterized protein (72 aa).

This is an uncharacterized protein from Escherichia coli (Bacteriophage T4).